Consider the following 874-residue polypeptide: Coatomer subunit gamma-1 (874 aa).

A compositionally biased stretch (basic and acidic residues) spans 1–11; it reads MLKKFDKKDEE. The segment at 1–21 is disordered; that stretch reads MLKKFDKKDEESGGGSNPFQH. HEAT repeat units lie at residues 64 to 101, 283 to 320, 322 to 355, and 356 to 392; these read TEATEAFFAMTKLFQSNDPTLRRMCYLTIKEMSCIAED, KELAPAVSVLQLFCSSPKAALRYAAVRTLNKVAMKHPS, VTACNLDLENLVTDANRSIATLAITTLLKTGSEG, and SIDRLMKQISSFMSEISDEFKVVVVQAISALCQKYPR. Position 594 is a phosphothreonine (T594). Positions 609-874 are interaction with ZNF289/ARFGAP2; it reads RQEIFQEQLA…PVDIVLASVG (266 aa).

Belongs to the COPG family. Oligomeric complex that consists of at least the alpha, beta, beta', gamma, delta, epsilon and zeta subunits. Interacts with ZNF289/ARFGAP2 through its C-terminal appendage domain. Interacts with EGFR upon EGF treatment; interaction is essential for regulation of EGF-dependent nuclear transport of EGFR by retrograde trafficking from the Golgi to the ER. The coatomer interacts with KDEL receptors; the interaction is important for retrograde trafficking of KDEL-bearing proteins from the Golgi to the endoplasmic reticulum. Interacts with COPB1. Interacts with TMED10 (via C-terminus). Interacts with TMED2, TMED3, TMED7 and TMED9.

The protein localises to the cytoplasm. The protein resides in the cytosol. Its subcellular location is the golgi apparatus membrane. It localises to the cytoplasmic vesicle. It is found in the COPI-coated vesicle membrane. Functionally, the coatomer is a cytosolic protein complex that binds to dilysine motifs and reversibly associates with Golgi non-clathrin-coated vesicles, which further mediate biosynthetic protein transport from the ER, via the Golgi up to the trans Golgi network. Coatomer complex is required for budding from Golgi membranes, and is essential for the retrograde Golgi-to-ER transport of dilysine-tagged proteins. In mammals, the coatomer can only be recruited by membranes associated to ADP-ribosylation factors (ARFs), which are small GTP-binding proteins; the complex also influences the Golgi structural integrity, as well as the processing, activity, and endocytic recycling of LDL receptors. Required for limiting lipid storage in lipid droplets. Involved in lipid homeostasis by regulating the presence of perilipin family members PLIN2 and PLIN3 at the lipid droplet surface and promoting the association of adipocyte triglyceride lipase (PNPLA2) with the lipid droplet surface to mediate lipolysis. This Bos taurus (Bovine) protein is Coatomer subunit gamma-1 (COPG1).